The sequence spans 963 residues: Pyruvate, phosphate dikinase 1, chloroplastic (963 aa).

The transit peptide at Met1 to Ala76 directs the protein to the chloroplast. A Phosphothreonine; by PDRP1 modification is found at Thr543. The Tele-phosphohistidine intermediate role is filled by His545. 7 residues coordinate substrate: Arg651, Arg707, Glu836, Gly857, Thr858, Asn859, and Asp860. Mg(2+) is bound at residue Glu836. Asp860 lines the Mg(2+) pocket. The active-site Proton donor is the Cys922.

This sequence belongs to the PEP-utilizing enzyme family. As to quaternary structure, homotetramer. Interacts with RP1 and RP2. It depends on Mg(2+) as a cofactor. Post-translationally, phosphorylation of Thr-543 in the dark inactivates the enzyme. Dephosphorylation upon light stimulation reactivates the enzyme. As to expression, isoform 1 is expressed in leaves, flowers and siliques. Isoform 2 is found in cotyledons, rosette and cauline leaves, petioles, flowers and siliques.

It localises to the plastid. The protein resides in the chloroplast. Its subcellular location is the cytoplasm. The enzyme catalyses pyruvate + phosphate + ATP = phosphoenolpyruvate + AMP + diphosphate + H(+). With respect to regulation, activated by light-induced dephosphorylation. Inhibited by dark-induced phosphorylation. Both reactions are catalyzed by PDRP1. Formation of phosphoenolpyruvate. May be involved in regulating the flux of carbon into starch and fatty acids of seeds and in the remobilization of nitrogen reserves in senescing leaves. The sequence is that of Pyruvate, phosphate dikinase 1, chloroplastic (PPDK) from Arabidopsis thaliana (Mouse-ear cress).